Here is a 382-residue protein sequence, read N- to C-terminus: Histidinol-phosphate aminotransferase (382 aa).

At Lys215 the chain carries N6-(pyridoxal phosphate)lysine. The tract at residues Asn363 to Ile382 is disordered.

Belongs to the class-II pyridoxal-phosphate-dependent aminotransferase family. Histidinol-phosphate aminotransferase subfamily. Homodimer. Requires pyridoxal 5'-phosphate as cofactor.

It catalyses the reaction L-histidinol phosphate + 2-oxoglutarate = 3-(imidazol-4-yl)-2-oxopropyl phosphate + L-glutamate. It participates in amino-acid biosynthesis; L-histidine biosynthesis; L-histidine from 5-phospho-alpha-D-ribose 1-diphosphate: step 7/9. The sequence is that of Histidinol-phosphate aminotransferase from Yersinia pseudotuberculosis serotype O:3 (strain YPIII).